Here is a 104-residue protein sequence, read N- to C-terminus: MSRRKRPNWINTIALERMQILFEQAEKEFSKHPERSDRYVKLTRNISTKYNIPLPNYWRGRFCKNCNKFLKPGSNLRVRLSNNTISRKCLECGDLKKVPYTKKN.

Zn(2+)-binding residues include C63, C66, C89, and C92.

This sequence belongs to the eukaryotic/archaeal RNase P protein component 4 family. Consists of a catalytic RNA component and at least 4-5 protein subunits. Zn(2+) serves as cofactor.

Its subcellular location is the cytoplasm. It catalyses the reaction Endonucleolytic cleavage of RNA, removing 5'-extranucleotides from tRNA precursor.. Its function is as follows. Part of ribonuclease P, a protein complex that generates mature tRNA molecules by cleaving their 5'-ends. This chain is Ribonuclease P protein component 4, found in Methanosphaera stadtmanae (strain ATCC 43021 / DSM 3091 / JCM 11832 / MCB-3).